The primary structure comprises 125 residues: Large ribosomal subunit protein bL12 (125 aa).

The protein belongs to the bacterial ribosomal protein bL12 family. Homodimer. Part of the ribosomal stalk of the 50S ribosomal subunit. Forms a multimeric L10(L12)X complex, where L10 forms an elongated spine to which 2 to 4 L12 dimers bind in a sequential fashion. Binds GTP-bound translation factors.

In terms of biological role, forms part of the ribosomal stalk which helps the ribosome interact with GTP-bound translation factors. Is thus essential for accurate translation. The sequence is that of Large ribosomal subunit protein bL12 from Porphyromonas gingivalis (strain ATCC 33277 / DSM 20709 / CIP 103683 / JCM 12257 / NCTC 11834 / 2561).